We begin with the raw amino-acid sequence, 323 residues long: uncharacterized protein (323 aa).

A disordered region spans residues 1–21 (MGSYYSTESTKSNESNETTNN). The N-myristoyl glycine; by host moiety is linked to residue G2.

This is an uncharacterized protein from Acanthamoeba polyphaga (Amoeba).